The chain runs to 404 residues: Keratin, type I microfibrillar, 47.6 kDa (404 aa).

The tract at residues 1–56 is head; that stretch reads MSFNFCLPNLSFRSSCSSRPCVPSSCCGTTLPGACNIPASVGSCNWFCEGSFNGNE. An IF rod domain is found at 56-367; the sequence is EKETMQFLND…GLLDSEDCKL (312 aa). The interval 57-91 is coil 1A; sequence KETMQFLNDRLASYLEKVRQLERENAELERRILER. A linker 1 region spans residues 92–102; sequence SQQQEPLVCPN. The coil 1B stretch occupies residues 103–203; the sequence is YQSYFRTIEE…HEQEVNTLRS (101 aa). The tract at residues 204-219 is linker 12; sequence QLGDRLNVEVDAAPTV. The segment at 220-363 is coil 2; that stretch reads DLNHVLNETR…NTYRGLLDSE (144 aa). The tail stretch occupies residues 364 to 404; that stretch reads DCKLPCNPCATTNTCGKPIGPCISNPCVSRTRCGPCNTFVH.

Belongs to the intermediate filament family.

Wool microfibrillar keratin. This is Keratin, type I microfibrillar, 47.6 kDa from Ovis aries (Sheep).